The chain runs to 462 residues: UDP-N-acetylmuramoylalanine--D-glutamate ligase (462 aa).

ATP is bound at residue Gly-125 to Thr-131.

Belongs to the MurCDEF family.

The protein resides in the cytoplasm. The enzyme catalyses UDP-N-acetyl-alpha-D-muramoyl-L-alanine + D-glutamate + ATP = UDP-N-acetyl-alpha-D-muramoyl-L-alanyl-D-glutamate + ADP + phosphate + H(+). Its pathway is cell wall biogenesis; peptidoglycan biosynthesis. Functionally, cell wall formation. Catalyzes the addition of glutamate to the nucleotide precursor UDP-N-acetylmuramoyl-L-alanine (UMA). This is UDP-N-acetylmuramoylalanine--D-glutamate ligase from Clostridium acetobutylicum (strain ATCC 824 / DSM 792 / JCM 1419 / IAM 19013 / LMG 5710 / NBRC 13948 / NRRL B-527 / VKM B-1787 / 2291 / W).